Reading from the N-terminus, the 247-residue chain is MSFDTPLKPYLAIPIQDCGEPLAPINLEGVKSLKPHPYAQVGADYQGRSPYVLRTGVLKRLDQARLTLADIEPSWEILVFDAYRPIAVQQFMVDHTFAEIVARDGLQGQVLTPEQKENIYHQVYQIWAVPNNNPLTPPPHSTGAALDITLLDDLGQPVDMGGEIDELSARSLPNYYQTVEPNSDRQRKEFEQYQRRRELLNTIMESAGFLRHPGEWWHFSQGDQLWAWQYNQRHPDHQKIAYYGRVE.

2 residues coordinate Zn(2+): His140 and Asp147. The active-site Proton donor/acceptor is the Glu215. Residue His218 participates in Zn(2+) binding.

It belongs to the peptidase M15D family. Zn(2+) serves as cofactor.

It localises to the cytoplasm. The enzyme catalyses D-alanyl-D-alanine + H2O = 2 D-alanine. Its function is as follows. Catalyzes hydrolysis of the D-alanyl-D-alanine dipeptide. May have a role in cell-wall turnover. The chain is D-alanyl-D-alanine dipeptidase from Synechocystis sp. (strain ATCC 27184 / PCC 6803 / Kazusa).